The sequence spans 140 residues: Cytochrome c oxidase subunit 6, mitochondrial (140 aa).

This sequence belongs to the cytochrome c oxidase subunit 5A family. Component of the cytochrome c oxidase (complex IV, CIV), a multisubunit enzyme composed of a catalytic core of 3 subunits and several supernumerary subunits. The complex exists as a monomer or a dimer and forms supercomplexes (SCs) in the inner mitochondrial membrane with ubiquinol-cytochrome c oxidoreductase (cytochrome b-c1 complex, complex III, CIII).

Its subcellular location is the mitochondrion inner membrane. It functions in the pathway energy metabolism; oxidative phosphorylation. Its function is as follows. Component of the cytochrome c oxidase, the last enzyme in the mitochondrial electron transport chain which drives oxidative phosphorylation. The respiratory chain contains 3 multisubunit complexes succinate dehydrogenase (complex II, CII), ubiquinol-cytochrome c oxidoreductase (cytochrome b-c1 complex, complex III, CIII) and cytochrome c oxidase (complex IV, CIV), that cooperate to transfer electrons derived from NADH and succinate to molecular oxygen, creating an electrochemical gradient over the inner membrane that drives transmembrane transport and the ATP synthase. Cytochrome c oxidase is the component of the respiratory chain that catalyzes the reduction of oxygen to water. Electrons originating from reduced cytochrome c in the intermembrane space (IMS) are transferred via the dinuclear copper A center (CU(A)) of subunit 2 and heme A of subunit 1 to the active site in subunit 1, a binuclear center (BNC) formed by heme A3 and copper B (CU(B)). The BNC reduces molecular oxygen to 2 water molecules using 4 electrons from cytochrome c in the IMS and 4 protons from the mitochondrial matrix. The polypeptide is Cytochrome c oxidase subunit 6, mitochondrial (cox6) (Schizosaccharomyces pombe (strain 972 / ATCC 24843) (Fission yeast)).